We begin with the raw amino-acid sequence, 614 residues long: tRNA uridine 5-carboxymethylaminomethyl modification enzyme MnmG (614 aa).

10 to 15 lines the FAD pocket; the sequence is GAGHAG. 271–285 is a binding site for NAD(+); that stretch reads GPRYCPSIEDKIVKF.

The protein belongs to the MnmG family. As to quaternary structure, homodimer. Heterotetramer of two MnmE and two MnmG subunits. Requires FAD as cofactor.

Its subcellular location is the cytoplasm. NAD-binding protein involved in the addition of a carboxymethylaminomethyl (cmnm) group at the wobble position (U34) of certain tRNAs, forming tRNA-cmnm(5)s(2)U34. The sequence is that of tRNA uridine 5-carboxymethylaminomethyl modification enzyme MnmG from Ureaplasma urealyticum serovar 10 (strain ATCC 33699 / Western).